We begin with the raw amino-acid sequence, 1363 residues long: ABC multidrug transporter MDR2 (1363 aa).

Residues 65-85 (IALIVIGTIAGIGAGIPFPLL) traverse the membrane as a helical segment. The region spanning 69 to 367 (VIGTIAGIGA…MAPFMHIFAS (299 aa)) is the ABC transmembrane type-1 1 domain. A glycan (N-linked (GlcNAc...) asparagine) is linked at asparagine 97. Transmembrane regions (helical) follow at residues 119–139 (VLQVIYVSILNFVCMYIHTGC), 193–213 (KVGLFIGTISYFVAAYIVAFL), 215–235 (VATIAAMLMSVVPIYFLMAFG), 301–321 (IQFGMLYFVAYASNALAFWQG), and 336–356 (VSVGAVYTVIFVLLDASFVLS). An ABC transporter 1 domain is found at 403-682 (IELQDVTFNY…DGVYAGMVRL (280 aa)). Position 438 to 445 (438 to 445 (GTSGSGKS)) interacts with ATP. N-linked (GlcNAc...) asparagine glycans are attached at residues asparagine 552 and asparagine 633. The segment at 738-758 (YMPEEADSLPTEPENEKEKPK) is disordered. Transmembrane regions (helical) follow at residues 781–801 (LGLITSIMIGVSYTGEAVIFG), 820–840 (GMLFGLLFFILAIVKFAAVIV), and 896–916 (LTGTTIGVLFSTVANLFAGVI). The region spanning 781 to 1052 (LGLITSIMIG…MFALVPDISK (272 aa)) is the ABC transmembrane type-1 2 domain. A glycan (N-linked (GlcNAc...) asparagine) is linked at asparagine 973. 2 helical membrane passes run 992 to 1012 (FWLSLAYSISTLVYALAYWWG) and 1016 to 1036 (ILAGMYTQVQFFIVLPALLFS). The 240-residue stretch at 1119–1358 (VQFRNVHFRY…CESYRANVIH (240 aa)) folds into the ABC transporter 2 domain. Residue 1154–1161 (GPSGSGKS) coordinates ATP.

This sequence belongs to the ABC transporter superfamily. ABCB family. Multidrug resistance exporter (TC 3.A.1.201) subfamily.

It is found in the cell membrane. In terms of biological role, pleiotropic ABC efflux transporter that may be involved in the modulation susceptibility to a wide range of unrelated cytotoxic compounds. The chain is ABC multidrug transporter MDR2 from Trichophyton tonsurans (strain CBS 112818) (Scalp ringworm fungus).